The sequence spans 61 residues: Temporin-SN3 (61 aa).

Positions 1 to 22 (MFTLKKTLLLLFFLGTINLSLC) are cleaved as a signal peptide. The propeptide at 23–44 (EEERNAEEERRDGDDEMDVEVK) is removed in mature form. Lysine amide is present on Lys61.

Belongs to the frog skin active peptide (FSAP) family. Temporin subfamily. In terms of tissue distribution, expressed by the skin glands.

The protein localises to the secreted. In terms of biological role, antimicrobial peptide. Active against some Gram-positive and Gram-negative bacterial strains. Active against fungus C.glabrata 090902 but not against C.albicans ATCC 12231. Shows weak hemolytic activity against human erythrocytes. The sequence is that of Temporin-SN3 from Sylvirana spinulosa (Fine-spined frog).